A 138-amino-acid polypeptide reads, in one-letter code: Basic phospholipase A2 homolog Tpu-K49a (138 aa).

The signal sequence occupies residues 1–16 (MRTLWIMAVLLVGVEG). Cystine bridges form between Cys-42–Cys-131, Cys-44–Cys-60, Cys-59–Cys-111, Cys-65–Cys-138, Cys-66–Cys-104, and Cys-91–Cys-102. The interval 121–133 (KKERINTKIFCKK) is important for membrane-damaging activities in eukaryotes and bacteria; heparin-binding.

Monomer. As to expression, expressed by the venom gland.

It localises to the secreted. Its function is as follows. Snake venom phospholipase A2 homolog that lacks catalytic activity. Induces local edema a few hours after injection in the hind foot. Is myotoxic. A model of myotoxic mechanism has been proposed: an apo Lys49-PLA2 is activated by the entrance of a hydrophobic molecule (e.g. fatty acid) at the hydrophobic channel of the protein leading to a reorientation of a monomer. This reorientation causes a transition between 'inactive' to 'active' states, causing alignment of C-terminal and membrane-docking sites (MDoS) side-by-side and putting the membrane-disruption sites (MDiS) in the same plane, exposed to solvent and in a symmetric position for both monomers. The MDoS region stabilizes the toxin on membrane by the interaction of charged residues with phospholipid head groups. Subsequently, the MDiS region destabilizes the membrane with penetration of hydrophobic residues. This insertion causes a disorganization of the membrane, allowing an uncontrolled influx of ions (i.e. calcium and sodium), and eventually triggering irreversible intracellular alterations and cell death. The polypeptide is Basic phospholipase A2 homolog Tpu-K49a (Craspedocephalus puniceus (Flat-nosed pitviper)).